Consider the following 345-residue polypeptide: UPF0284 protein STK_21430 (345 aa).

This sequence belongs to the UPF0284 family.

The polypeptide is UPF0284 protein STK_21430 (Sulfurisphaera tokodaii (strain DSM 16993 / JCM 10545 / NBRC 100140 / 7) (Sulfolobus tokodaii)).